We begin with the raw amino-acid sequence, 829 residues long: MNRRDFMKANAVIAAASAAGLALPAGASNLITSSEQTKLEWNKAPCRFCGTGCSVMVATREGKVVATHGDANSEVNRGLSCIKGYFLSKIMYGRDRLTSPMLRMTDGKYDKHGEFTPVSWEKAFDTMAERWKATIKEKGPTAVGMFGSGQWTVWEGYAAVKLMKAGFGTNNIDPNARHCMASAVAGFMRTFGIDEPMGCYDDMEAADAFVLWGSNMAEMHPILWTRVTDRRLSAPHVKVAVLSTFEHRSFDLADLPMVFHPQTDLAILNFIANYIIQNNKVNWDFVNKHVNFRKGTTDIGYGLRPAHPTQMKSKNAATANDSTPIDFEQFKKFVADYDVESVSKLSGVPEHKLLELAELYADPKVKVTSFWTMGFNQHTRGVWCNNLMYNIHLLVGKISTPGNSPFSLTGQPSACGTAREVGTFSHRLPADMVVTDPKHRKIAENIWKIPSGIIPEKPGYHAVEQSRRLKDGDLNCYWVQVNNNMQAGPNINEEGLPGYRNPANFIVVSDAYPTVTTQAADLILPTAMWVEKEGAYGNAERRTQFWHQMVKAPGESKSDLWQLMEFSKRFTTDEVWSKAVLDANPKYKGKTLFEVLFKNGQVDKFPLADADPKYMNDENDAFGFYVQKGLFEEYATFGRGHGHDLADFDTYHKEHGLRWPVVDGKETKWRFREGSDPYVKAGTGFEFYGKPDGRAVIFALPYEPAAEAPDEEFDMWLSTGRVLEHWHSGSMTQRVPELYKAFPDAVCFMHPDDAKKRGLRRGDEVKVMSRRGEIKTRIETRGRNKPPVGLVFVPWFDASQLINKVTLDATDPISKQTDFKKCAVKVIKA.

A signal peptide (tat-type signal) is located at residues 1–27 (MNRRDFMKANAVIAAASAAGLALPAGA). The region spanning 39–95 (LEWNKAPCRFCGTGCSVMVATREGKVVATHGDANSEVNRGLSCIKGYFLSKIMYGRD) is the 4Fe-4S Mo/W bis-MGD-type domain. [4Fe-4S] cluster is bound by residues C46, C49, C53, and C81. Residues K83, Q150, N175, C179, 212–219 (WGSNMAEM), 243–247 (STFEH), 262–264 (QTD), M373, Q377, N483, 509–510 (SD), K532, D559, and 719–728 (TGRVLEHWHS) contribute to the Mo-bis(molybdopterin guanine dinucleotide) site. W795 is a substrate binding site. N803 and K820 together coordinate Mo-bis(molybdopterin guanine dinucleotide).

The protein belongs to the prokaryotic molybdopterin-containing oxidoreductase family. NasA/NapA/NarB subfamily. In terms of assembly, component of the periplasmic nitrate reductase NapAB complex composed of NapA and NapB. [4Fe-4S] cluster is required as a cofactor. It depends on Mo-bis(molybdopterin guanine dinucleotide) as a cofactor. Post-translationally, predicted to be exported by the Tat system. The position of the signal peptide cleavage has not been experimentally proven.

The protein resides in the periplasm. It carries out the reaction 2 Fe(II)-[cytochrome] + nitrate + 2 H(+) = 2 Fe(III)-[cytochrome] + nitrite + H2O. Its function is as follows. Catalytic subunit of the periplasmic nitrate reductase complex NapAB. Receives electrons from NapB and catalyzes the reduction of nitrate to nitrite. The sequence is that of Periplasmic nitrate reductase from Shewanella denitrificans (strain OS217 / ATCC BAA-1090 / DSM 15013).